The sequence spans 1510 residues: Chromosome partition protein MukB (1510 aa).

75 to 82 (GGNGAGKS) contacts ATP. Residues 346-706 (QHRLVDLSRE…LDEQISRLSQ (361 aa)) are a coiled coil. The interval 707-824 (PDGSEDPRLN…EIPLFGCAAR (118 aa)) is flexible hinge. Coiled coils occupy residues 825-1154 (EKRL…AAKV) and 1248-1304 (IDAI…LQNI).

Belongs to the SMC family. MukB subfamily. In terms of assembly, homodimerization via its hinge domain. Binds to DNA via its C-terminal region. Interacts, and probably forms a ternary complex, with MukE and MukF via its C-terminal region. The complex formation is stimulated by calcium or magnesium. Interacts with tubulin-related protein FtsZ.

The protein resides in the cytoplasm. Its subcellular location is the nucleoid. In terms of biological role, plays a central role in chromosome condensation, segregation and cell cycle progression. Functions as a homodimer, which is essential for chromosome partition. Involved in negative DNA supercoiling in vivo, and by this means organize and compact chromosomes. May achieve or facilitate chromosome segregation by condensation DNA from both sides of a centrally located replisome during cell division. The polypeptide is Chromosome partition protein MukB (Haemophilus influenzae (strain ATCC 51907 / DSM 11121 / KW20 / Rd)).